A 305-amino-acid chain; its full sequence is Homoserine O-acetyltransferase (305 aa).

Cys-142 acts as the Acyl-thioester intermediate in catalysis. Residues Lys-163 and Ser-192 each contribute to the substrate site. His-235 (proton acceptor) is an active-site residue. Glu-237 is a catalytic residue. A substrate-binding site is contributed by Arg-249.

It belongs to the MetA family.

The protein localises to the cytoplasm. It catalyses the reaction L-homoserine + acetyl-CoA = O-acetyl-L-homoserine + CoA. It functions in the pathway amino-acid biosynthesis; L-methionine biosynthesis via de novo pathway; O-acetyl-L-homoserine from L-homoserine: step 1/1. Functionally, transfers an acetyl group from acetyl-CoA to L-homoserine, forming acetyl-L-homoserine. The sequence is that of Homoserine O-acetyltransferase from Bacteroides fragilis (strain YCH46).